The primary structure comprises 255 residues: Acetylglutamate kinase (255 aa).

Residues 40-41, arginine 62, and asparagine 153 each bind substrate; that span reads GG.

It belongs to the acetylglutamate kinase family. ArgB subfamily.

Its subcellular location is the cytoplasm. It catalyses the reaction N-acetyl-L-glutamate + ATP = N-acetyl-L-glutamyl 5-phosphate + ADP. It participates in amino-acid biosynthesis; L-arginine biosynthesis; N(2)-acetyl-L-ornithine from L-glutamate: step 2/4. In terms of biological role, catalyzes the ATP-dependent phosphorylation of N-acetyl-L-glutamate. The sequence is that of Acetylglutamate kinase from Bacillus thuringiensis (strain Al Hakam).